Reading from the N-terminus, the 435-residue chain is uncharacterized protein (435 aa).

Residue Ser-47 is modified to Phosphoserine. 2 disordered regions span residues 174 to 210 (LKKK…DDED) and 290 to 372 (KAEA…EDNK). Residues 195 to 210 (NEEDEEDEEDEEDDED) are compositionally biased toward acidic residues. Over residues 290 to 304 (KAEATGEAHSKDVSA) the composition is skewed to basic and acidic residues. The segment covering 308–318 (SANTTTSFDET) has biased composition (polar residues). 2 stretches are compositionally biased toward basic and acidic residues: residues 322-340 (EDEK…KEAN) and 347-361 (VADR…KVND).

It is found in the cytoplasm. This is an uncharacterized protein from Saccharomyces cerevisiae (strain ATCC 204508 / S288c) (Baker's yeast).